Reading from the N-terminus, the 89-residue chain is Small ribosomal subunit protein uS15 (89 aa).

The protein belongs to the universal ribosomal protein uS15 family. Part of the 30S ribosomal subunit. Forms a bridge to the 50S subunit in the 70S ribosome, contacting the 23S rRNA.

Functionally, one of the primary rRNA binding proteins, it binds directly to 16S rRNA where it helps nucleate assembly of the platform of the 30S subunit by binding and bridging several RNA helices of the 16S rRNA. In terms of biological role, forms an intersubunit bridge (bridge B4) with the 23S rRNA of the 50S subunit in the ribosome. The chain is Small ribosomal subunit protein uS15 from Shewanella woodyi (strain ATCC 51908 / MS32).